The primary structure comprises 64 residues: Probable cytochrome c oxidase subunit 5C-1 (64 aa).

Residues 15-34 traverse the membrane as a helical segment; sequence SVVKELFIGLALGLAAGGLW.

Belongs to the cytochrome c oxidase subunit 5C family.

The protein resides in the mitochondrion inner membrane. This protein is one of the nuclear-coded polypeptide chains of cytochrome c oxidase, the terminal oxidase in mitochondrial electron transport. This is Probable cytochrome c oxidase subunit 5C-1 from Arabidopsis thaliana (Mouse-ear cress).